The primary structure comprises 701 residues: Elongation factor G 2 (701 aa).

Positions 8-291 constitute a tr-type G domain; that stretch reads ERYRNIGISA…AVIDYLPSPA (284 aa). Residues 17-24, 88-92, and 142-145 contribute to the GTP site; these read AHIDAGKT, DTPGH, and NKMD.

Belongs to the TRAFAC class translation factor GTPase superfamily. Classic translation factor GTPase family. EF-G/EF-2 subfamily.

It localises to the cytoplasm. Its function is as follows. Catalyzes the GTP-dependent ribosomal translocation step during translation elongation. During this step, the ribosome changes from the pre-translocational (PRE) to the post-translocational (POST) state as the newly formed A-site-bound peptidyl-tRNA and P-site-bound deacylated tRNA move to the P and E sites, respectively. Catalyzes the coordinated movement of the two tRNA molecules, the mRNA and conformational changes in the ribosome. This chain is Elongation factor G 2, found in Burkholderia lata (strain ATCC 17760 / DSM 23089 / LMG 22485 / NCIMB 9086 / R18194 / 383).